The primary structure comprises 184 residues: Acireductone dioxygenase (184 aa).

Fe(2+) is bound by residues His87, His89, Glu93, and His137. Ni(2+) is bound by residues His87, His89, Glu93, and His137.

Belongs to the acireductone dioxygenase (ARD) family. The cofactor is Fe(2+). Requires Ni(2+) as cofactor.

It localises to the cytoplasm. The protein localises to the nucleus. It carries out the reaction 1,2-dihydroxy-5-(methylsulfanyl)pent-1-en-3-one + O2 = 4-methylsulfanyl-2-oxobutanoate + formate + 2 H(+). It catalyses the reaction 1,2-dihydroxy-5-(methylsulfanyl)pent-1-en-3-one + O2 = 3-(methylsulfanyl)propanoate + CO + formate + 2 H(+). It participates in amino-acid biosynthesis; L-methionine biosynthesis via salvage pathway; L-methionine from S-methyl-5-thio-alpha-D-ribose 1-phosphate: step 5/6. Its function is as follows. Catalyzes 2 different reactions between oxygen and the acireductone 1,2-dihydroxy-3-keto-5-methylthiopentene (DHK-MTPene) depending upon the metal bound in the active site. Fe-containing acireductone dioxygenase (Fe-ARD) produces formate and 2-keto-4-methylthiobutyrate (KMTB), the alpha-ketoacid precursor of methionine in the methionine recycle pathway. Ni-containing acireductone dioxygenase (Ni-ARD) produces methylthiopropionate, carbon monoxide and formate, and does not lie on the methionine recycle pathway. This Ciona intestinalis (Transparent sea squirt) protein is Acireductone dioxygenase.